The sequence spans 248 residues: MGIKVGVLGAKGRVGQTIVAAVNESDDLELVAEIGVDDDLSLLVDNGAEVVVDFTTPNAVMGNLEFCINNGISAVVGTTGFDDARLEQVRDWLEGKDNVGVLIAPNFAISAVLTMVFSKQAARFFESAEVIELHHPNKLDAPSGTAIHTAQGIAAARKEAGMDAQPDATEQALEGSRGASVDGIPVHAVRMSGMVAHEQVIFGTQGQTLTIKQDSYDRNSFAPGVLVGVRNIAQHPGLVVGLEHYLGL.

Residues 9–14 (GAKGRV), 77–79 (GTT), and 104–107 (APNF) each bind NAD(+). Histidine 134 acts as the Proton donor/acceptor in catalysis. Histidine 135 provides a ligand contact to (S)-2,3,4,5-tetrahydrodipicolinate. The Proton donor role is filled by lysine 138. 144-145 (GT) contributes to the (S)-2,3,4,5-tetrahydrodipicolinate binding site.

The protein belongs to the DapB family.

The protein localises to the cytoplasm. It carries out the reaction (S)-2,3,4,5-tetrahydrodipicolinate + NAD(+) + H2O = (2S,4S)-4-hydroxy-2,3,4,5-tetrahydrodipicolinate + NADH + H(+). The catalysed reaction is (S)-2,3,4,5-tetrahydrodipicolinate + NADP(+) + H2O = (2S,4S)-4-hydroxy-2,3,4,5-tetrahydrodipicolinate + NADPH + H(+). Its pathway is amino-acid biosynthesis; L-lysine biosynthesis via DAP pathway; (S)-tetrahydrodipicolinate from L-aspartate: step 4/4. In terms of biological role, catalyzes the conversion of 4-hydroxy-tetrahydrodipicolinate (HTPA) to tetrahydrodipicolinate. This is 4-hydroxy-tetrahydrodipicolinate reductase from Corynebacterium glutamicum (strain ATCC 13032 / DSM 20300 / JCM 1318 / BCRC 11384 / CCUG 27702 / LMG 3730 / NBRC 12168 / NCIMB 10025 / NRRL B-2784 / 534).